Here is a 372-residue protein sequence, read N- to C-terminus: N-methyl-L-tryptophan oxidase (372 aa).

Residue 4-34 coordinates FAD; it reads DLIIIGSGSVGAAAGYYATRAGLNVLMTDAH. The residue at position 308 (Cys308) is an S-8alpha-FAD cysteine.

The protein belongs to the MSOX/MTOX family. MTOX subfamily. In terms of assembly, monomer. The cofactor is FAD.

It catalyses the reaction N(alpha)-methyl-L-tryptophan + O2 + H2O = L-tryptophan + formaldehyde + H2O2. Catalyzes the oxidative demethylation of N-methyl-L-tryptophan. The sequence is that of N-methyl-L-tryptophan oxidase from Escherichia coli O1:K1 / APEC.